A 425-amino-acid polypeptide reads, in one-letter code: uncharacterized protein (425 aa).

The next 12 helical transmembrane spans lie at 15–35 (LICAFTGFNSGLPLFVLSQML), 48–68 (LIGAVTGVMLPYGLKFLWAPL), 84–104 (MLLSQVALLILLYIISLFDPL), 107–127 (LGTVANIALLIAFFSATQDIV), 149–169 (INAYRIAGLIPGGLSLYLAAI), 174–194 (TVFLWTALCMLAGIFMTLFLA), 225–245 (VIQAIGFLLFLFLYKFGDSFA), 271–291 (ALWSSILSGLAGGMIMLKLGI), 295–315 (LWLFGLVQMVTIGGFIWLAAF), 331–351 (VVIAAEYIGVGLGTAAFVAFM), 370–390 (LSALPSKVLGILSGYVVGAVG), and 395–415 (FWFCLFLAIPGMLCLFWVAPL).

To E.coli AmpG and yeast YBR220c.

Its subcellular location is the cell inner membrane. This is an uncharacterized protein from Haemophilus influenzae (strain ATCC 51907 / DSM 11121 / KW20 / Rd).